Here is a 448-residue protein sequence, read N- to C-terminus: UDP-N-acetylmuramoylalanine--D-glutamate ligase (448 aa).

116-122 is an ATP binding site; sequence GSNAKST.

This sequence belongs to the MurCDEF family.

It localises to the cytoplasm. The enzyme catalyses UDP-N-acetyl-alpha-D-muramoyl-L-alanine + D-glutamate + ATP = UDP-N-acetyl-alpha-D-muramoyl-L-alanyl-D-glutamate + ADP + phosphate + H(+). Its pathway is cell wall biogenesis; peptidoglycan biosynthesis. In terms of biological role, cell wall formation. Catalyzes the addition of glutamate to the nucleotide precursor UDP-N-acetylmuramoyl-L-alanine (UMA). The sequence is that of UDP-N-acetylmuramoylalanine--D-glutamate ligase from Pseudomonas syringae pv. tomato (strain ATCC BAA-871 / DC3000).